Consider the following 107-residue polypeptide: MTGLDRERIVDGAPALSAEELQAALAGLPGWQLAGDGKSICREWRFKNFKQAAQLANLAAWQAEAAGHHPDIAFGWGHARVSYSTHSAGGVSRNDLIMAARLDAATG.

This sequence belongs to the pterin-4-alpha-carbinolamine dehydratase family.

It carries out the reaction (4aS,6R)-4a-hydroxy-L-erythro-5,6,7,8-tetrahydrobiopterin = (6R)-L-erythro-6,7-dihydrobiopterin + H2O. The protein is Putative pterin-4-alpha-carbinolamine dehydratase of Paracoccus denitrificans (strain Pd 1222).